The sequence spans 283 residues: NAD kinase (283 aa).

Asp66 acts as the Proton acceptor in catalysis. Residues 66-67 (DG), Arg71, 137-138 (ND), His165, Asp167, and 178-183 (TGYSMS) each bind NAD(+).

This sequence belongs to the NAD kinase family. A divalent metal cation is required as a cofactor.

It localises to the cytoplasm. The catalysed reaction is NAD(+) + ATP = ADP + NADP(+) + H(+). Functionally, involved in the regulation of the intracellular balance of NAD and NADP, and is a key enzyme in the biosynthesis of NADP. Catalyzes specifically the phosphorylation on 2'-hydroxyl of the adenosine moiety of NAD to yield NADP. The protein is NAD kinase of Agathobacter rectalis (strain ATCC 33656 / DSM 3377 / JCM 17463 / KCTC 5835 / VPI 0990) (Eubacterium rectale).